Here is a 379-residue protein sequence, read N- to C-terminus: Inositol 3-kinase (379 aa).

ATP contacts are provided by residues Ser217, 267 to 270 (GAGD), and Asn294. Residue Asp270 is the Proton acceptor of the active site.

It belongs to the carbohydrate kinase pfkB family.

The enzyme catalyses myo-inositol + ATP = 1D-myo-inositol 3-phosphate + ADP + H(+). In terms of biological role, kinase that phosphorylates myo-inositol to produce multiple myo-inositol monophosphates, Ins(1)P, Ins(3)P, Ins(4)P, Ins(5)P and Ins(6)P. Participates in phytic acid biosynthesis in developing seeds. Phytic acid is the primary storage form of phosphorus in cereal grains and other plant seeds. The protein is Inositol 3-kinase of Zea mays (Maize).